Here is a 570-residue protein sequence, read N- to C-terminus: Urease subunit alpha (570 aa).

The region spanning 131–570 is the Urease domain; the sequence is GGMDSHIHFI…LPMAQRYFLF (440 aa). Residues H136, H138, and K219 each contribute to the Ni(2+) site. K219 bears the N6-carboxylysine mark. H221 contributes to the substrate binding site. Ni(2+) is bound by residues H248 and H274. H322 (proton donor) is an active-site residue. D362 contacts Ni(2+).

Belongs to the metallo-dependent hydrolases superfamily. Urease alpha subunit family. In terms of assembly, heterotrimer of UreA (gamma), UreB (beta) and UreC (alpha) subunits. Three heterotrimers associate to form the active enzyme. Ni cation is required as a cofactor. Carboxylation allows a single lysine to coordinate two nickel ions.

It is found in the cytoplasm. It carries out the reaction urea + 2 H2O + H(+) = hydrogencarbonate + 2 NH4(+). It functions in the pathway nitrogen metabolism; urea degradation; CO(2) and NH(3) from urea (urease route): step 1/1. This is Urease subunit alpha from Sinorhizobium medicae (strain WSM419) (Ensifer medicae).